The sequence spans 283 residues: Phosphatidylserine decarboxylase proenzyme (283 aa).

Catalysis depends on charge relay system; for autoendoproteolytic cleavage activity residues Asp90, His143, and Ser248. Residue Ser248 is the Schiff-base intermediate with substrate; via pyruvic acid; for decarboxylase activity of the active site. Ser248 is modified (pyruvic acid (Ser); by autocatalysis).

This sequence belongs to the phosphatidylserine decarboxylase family. PSD-B subfamily. Prokaryotic type I sub-subfamily. In terms of assembly, heterodimer of a large membrane-associated beta subunit and a small pyruvoyl-containing alpha subunit. Requires pyruvate as cofactor. In terms of processing, is synthesized initially as an inactive proenzyme. Formation of the active enzyme involves a self-maturation process in which the active site pyruvoyl group is generated from an internal serine residue via an autocatalytic post-translational modification. Two non-identical subunits are generated from the proenzyme in this reaction, and the pyruvate is formed at the N-terminus of the alpha chain, which is derived from the carboxyl end of the proenzyme. The autoendoproteolytic cleavage occurs by a canonical serine protease mechanism, in which the side chain hydroxyl group of the serine supplies its oxygen atom to form the C-terminus of the beta chain, while the remainder of the serine residue undergoes an oxidative deamination to produce ammonia and the pyruvoyl prosthetic group on the alpha chain. During this reaction, the Ser that is part of the protease active site of the proenzyme becomes the pyruvoyl prosthetic group, which constitutes an essential element of the active site of the mature decarboxylase.

It localises to the cell membrane. The enzyme catalyses a 1,2-diacyl-sn-glycero-3-phospho-L-serine + H(+) = a 1,2-diacyl-sn-glycero-3-phosphoethanolamine + CO2. The protein operates within phospholipid metabolism; phosphatidylethanolamine biosynthesis; phosphatidylethanolamine from CDP-diacylglycerol: step 2/2. Its function is as follows. Catalyzes the formation of phosphatidylethanolamine (PtdEtn) from phosphatidylserine (PtdSer). In Francisella tularensis subsp. holarctica (strain OSU18), this protein is Phosphatidylserine decarboxylase proenzyme.